Consider the following 273-residue polypeptide: Putative pyruvate, phosphate dikinase regulatory protein (273 aa).

153 to 160 (GVSRTSKT) contacts ADP.

Belongs to the pyruvate, phosphate/water dikinase regulatory protein family. PDRP subfamily.

The catalysed reaction is N(tele)-phospho-L-histidyl/L-threonyl-[pyruvate, phosphate dikinase] + ADP = N(tele)-phospho-L-histidyl/O-phospho-L-threonyl-[pyruvate, phosphate dikinase] + AMP + H(+). It catalyses the reaction N(tele)-phospho-L-histidyl/O-phospho-L-threonyl-[pyruvate, phosphate dikinase] + phosphate + H(+) = N(tele)-phospho-L-histidyl/L-threonyl-[pyruvate, phosphate dikinase] + diphosphate. Its function is as follows. Bifunctional serine/threonine kinase and phosphorylase involved in the regulation of the pyruvate, phosphate dikinase (PPDK) by catalyzing its phosphorylation/dephosphorylation. The sequence is that of Putative pyruvate, phosphate dikinase regulatory protein from Sinorhizobium medicae (strain WSM419) (Ensifer medicae).